Consider the following 264-residue polypeptide: Diphthine synthase (264 aa).

S-adenosyl-L-methionine is bound by residues L10, D87, V90, 115–116, L166, A209, and H234; that span reads SI.

It belongs to the diphthine synthase family. Homodimer.

It catalyses the reaction 2-[(3S)-amino-3-carboxypropyl]-L-histidyl-[translation elongation factor 2] + 3 S-adenosyl-L-methionine = diphthine-[translation elongation factor 2] + 3 S-adenosyl-L-homocysteine + 3 H(+). It participates in protein modification; peptidyl-diphthamide biosynthesis. S-adenosyl-L-methionine-dependent methyltransferase that catalyzes the trimethylation of the amino group of the modified target histidine residue in translation elongation factor 2 (EF-2), to form an intermediate called diphthine. The three successive methylation reactions represent the second step of diphthamide biosynthesis. This chain is Diphthine synthase, found in Thermococcus gammatolerans (strain DSM 15229 / JCM 11827 / EJ3).